Here is a 116-residue protein sequence, read N- to C-terminus: Non-specific lipid-transfer protein AP10 (116 aa).

Positions 1–26 (MKGTSMGVAILAMIVMAQLMVHPSVA) are cleaved as a signal peptide. 4 cysteine pairs are disulfide-bonded: C29–C76, C39–C53, C54–C98, and C74–C112.

Belongs to the plant LTP family. In germinating seeds, detected in the entire surface of the cotyledons, shoot meristem, inter-cotyledon space, primary xylem and immature vascular elements (at protein level). Expressed in seeds, but not the aerial parts of the plant.

Its subcellular location is the secreted. It localises to the extracellular space. The protein localises to the membrane. In terms of biological role, plant non-specific lipid-transfer proteins transfer phospholipids as well as galactolipids across membranes. May play a role in wax or cutin deposition in the cell walls of expanding epidermal cells and certain secretory tissues. Permeabilizes the membrane of fungal spores, inhibits germination of the spores of the fungus F.solani at a concentration of 40 ug/ml. Inhibits the growth of F.solani with an IC(50) of 6.5 ug/ml, weakly inhibits the growth of the fungus A.alternata. Binds oleoyl-CoA. This is Non-specific lipid-transfer protein AP10 from Helianthus annuus (Common sunflower).